The chain runs to 122 residues: Large ribosomal subunit protein uL14 (122 aa).

Belongs to the universal ribosomal protein uL14 family. As to quaternary structure, part of the 50S ribosomal subunit. Forms a cluster with proteins L3 and L19. In the 70S ribosome, L14 and L19 interact and together make contacts with the 16S rRNA in bridges B5 and B8.

In terms of biological role, binds to 23S rRNA. Forms part of two intersubunit bridges in the 70S ribosome. The polypeptide is Large ribosomal subunit protein uL14 (Pelodictyon phaeoclathratiforme (strain DSM 5477 / BU-1)).